A 204-amino-acid chain; its full sequence is CASP-like protein 2A1 (204 aa).

Residues 1 to 11 (MEKSNDHDKAS) show a composition bias toward basic and acidic residues. A disordered region spans residues 1–25 (MEKSNDHDKASHGGSGGGATEKWEE). The Cytoplasmic portion of the chain corresponds to 1–32 (MEKSNDHDKASHGGSGGGATEKWEETSPGIRT). The chain crosses the membrane as a helical span at residues 33–53 (AETMLRLAPVGLCVAALVVML). Topologically, residues 54–74 (KDSETNEFGSISYSNLTAFRY) are extracellular. N-linked (GlcNAc...) asparagine glycosylation occurs at N68. Residues 75 to 95 (LVHANGICAGYSLLSAAIAAM) traverse the membrane as a helical segment. Over 96–113 (PRSSSTMPRVWTFFCLDQ) the chain is Cytoplasmic. A helical transmembrane segment spans residues 114 to 134 (LLTYLVLAAGAVSAEVLYLAY). The Extracellular portion of the chain corresponds to 135–155 (NGDSAITWSDACSSYGGFCHR). Residues 156-176 (ATASVIITFFVVCFYILLSLI) form a helical membrane-spanning segment. The Cytoplasmic segment spans residues 177–204 (SSYKLFTRFDPPSIVDSDKTLEVAVFGS).

Belongs to the Casparian strip membrane proteins (CASP) family. Homodimer and heterodimers.

It localises to the cell membrane. This Arabidopsis lyrata subsp. lyrata (Lyre-leaved rock-cress) protein is CASP-like protein 2A1.